Reading from the N-terminus, the 405-residue chain is Arginine biosynthesis bifunctional protein ArgJ (405 aa).

Residues threonine 152, lysine 178, threonine 189, glutamate 276, asparagine 400, and threonine 405 each coordinate substrate. The active-site Nucleophile is the threonine 189.

The protein belongs to the ArgJ family. In terms of assembly, heterotetramer of two alpha and two beta chains.

Its subcellular location is the cytoplasm. The catalysed reaction is N(2)-acetyl-L-ornithine + L-glutamate = N-acetyl-L-glutamate + L-ornithine. It carries out the reaction L-glutamate + acetyl-CoA = N-acetyl-L-glutamate + CoA + H(+). Its pathway is amino-acid biosynthesis; L-arginine biosynthesis; L-ornithine and N-acetyl-L-glutamate from L-glutamate and N(2)-acetyl-L-ornithine (cyclic): step 1/1. It functions in the pathway amino-acid biosynthesis; L-arginine biosynthesis; N(2)-acetyl-L-ornithine from L-glutamate: step 1/4. Catalyzes two activities which are involved in the cyclic version of arginine biosynthesis: the synthesis of N-acetylglutamate from glutamate and acetyl-CoA as the acetyl donor, and of ornithine by transacetylation between N(2)-acetylornithine and glutamate. In Pseudomonas aeruginosa (strain ATCC 15692 / DSM 22644 / CIP 104116 / JCM 14847 / LMG 12228 / 1C / PRS 101 / PAO1), this protein is Arginine biosynthesis bifunctional protein ArgJ.